We begin with the raw amino-acid sequence, 148 residues long: Lysozyme C (148 aa).

The N-terminal stretch at 1 to 18 (MKALIILGLVLLSVMVQA) is a signal peptide. The C-type lysozyme domain maps to 19 to 148 (KVFERCELAR…LRQYIQGCGV (130 aa)). Disulfide bonds link cysteine 24/cysteine 146, cysteine 48/cysteine 134, cysteine 83/cysteine 99, and cysteine 95/cysteine 113. Active-site residues include glutamate 53 and aspartate 71.

This sequence belongs to the glycosyl hydrolase 22 family. As to quaternary structure, monomer.

It is found in the secreted. The enzyme catalyses Hydrolysis of (1-&gt;4)-beta-linkages between N-acetylmuramic acid and N-acetyl-D-glucosamine residues in a peptidoglycan and between N-acetyl-D-glucosamine residues in chitodextrins.. Its function is as follows. Lysozymes have primarily a bacteriolytic function; those in tissues and body fluids are associated with the monocyte-macrophage system and enhance the activity of immunoagents. This chain is Lysozyme C (LYZ), found in Hylobates lar (Lar gibbon).